The sequence spans 620 residues: Somatic embryogenesis receptor kinase 4 (620 aa).

Residues 1–33 (MTSSKMEQRSLLCFLYLLLLFNFTLRVAGNAEG) form the signal peptide. Residues 34 to 234 (DALTQLKNSL…GGQMTAAIAG (201 aa)) lie on the Extracellular side of the membrane. LRR repeat units follow at residues 100 to 122 (NLQY…LGDL), 124 to 146 (ELVS…LGKL), 148 to 170 (KLRF…LTSV), 171 to 193 (QLQV…GSFS), and 194 to 215 (LFTP…PPTS). An N-linked (GlcNAc...) asparagine glycan is attached at Asn-110. Asn-156, Asn-189, and Asn-202 each carry an N-linked (GlcNAc...) asparagine glycan. Positions 205–227 (LTDLPEPPPTSTSPTPPPPSGGQ) are disordered. The segment covering 209–224 (PEPPPTSTSPTPPPPS) has biased composition (pro residues). Residues 235 to 255 (GVAAGAALLFAVPAIAFAWWL) form a helical membrane-spanning segment. The Cytoplasmic portion of the chain corresponds to 256-620 (RRKPQDHFFD…IENDYPSGPR (365 aa)). Thr-291 carries the phosphothreonine modification. The 298-residue stretch at 294-591 (FSNKNVLGRG…KEEMPIHDFN (298 aa)) folds into the Protein kinase domain. A Phosphoserine modification is found at Ser-295. Residues 300–308 (LGRGGFGKV) and Lys-322 contribute to the ATP site. A phosphoserine mark is found at Ser-375 and Ser-378. The Proton acceptor role is filled by Asp-421. A phosphothreonine mark is found at Thr-454, Thr-455, and Thr-460. Phosphotyrosine is present on Tyr-468. Ser-470 bears the Phosphoserine mark. Thr-471 carries the post-translational modification Phosphothreonine. Residue Ser-475 is modified to Phosphoserine. A Phosphothreonine modification is found at Thr-551.

The protein belongs to the protein kinase superfamily. Ser/Thr protein kinase family. Interacts with the EF-Tu receptor EFR and FLS2 in a specific ligand-induced manner. Interacts with TMK4/BARK1. Interacts with ERECTA in a EPF2-induced manner. Interacts with ERL1 in a EPF1-induced manner. Interacts with TMM. Forms a complex with MIK2 in response to SCOOP12 perception. Post-translationally, autophosphorylated on Thr and Tyr residues.

It is found in the cell membrane. The catalysed reaction is L-seryl-[protein] + ATP = O-phospho-L-seryl-[protein] + ADP + H(+). It catalyses the reaction L-threonyl-[protein] + ATP = O-phospho-L-threonyl-[protein] + ADP + H(+). The enzyme catalyses L-tyrosyl-[protein] + ATP = O-phospho-L-tyrosyl-[protein] + ADP + H(+). In terms of biological role, dual specificity kinase acting on both serine/threonine- and tyrosine-containing substrates. Positively regulates the BR-dependent plant growth pathway and negatively regulates the BR-independent cell-death pathway. Required during SCOOP small peptides (e.g. SCOOP10 and SCOOP12) perception and signaling; associates with MIK2 as a coreceptor upon MIK2 perception of SCOOP peptides, and relays the signaling through the activation of receptor-like cytosolic kinases (RLCKs) BIK1 and PBL1. In Arabidopsis thaliana (Mouse-ear cress), this protein is Somatic embryogenesis receptor kinase 4.